The sequence spans 632 residues: Galactan 5-O-arabinofuranosyltransferase (632 aa).

13 helical membrane passes run 10–30 (QIVLAAVVASGVAAVSLIAIA), 45–65 (ALTTVGQVGCLTGLLAVGGVW), 76–96 (LGGLVFVSAFTVVTLGMPLGA), 162–182 (WAITSITIAVAITLVLWWQMI), 184–204 (FEYALLVTIATAAVTLVYSSP), 206–226 (PYAAMITVLLPPALVLTWSGL), 242–259 (GWATVVGAGIFLGFAATW), 263–282 (LLAYTAFTVVLMTLLLATAL), 298–318 (LAGIVVIAAAIGAITWLPFLA), 344–364 (FPMLQFSLLGMICMLGTLWLI), 375–395 (ALMISVLAVYLWSLLSILTTL), 409–429 (LTVLLVTAGVFGFIETAQSLA), and 434–454 (AVLSVASAIGLAGAIAFSQDI). The Extracellular portion of the chain corresponds to 455-632 (PNVLRPDLTI…LAIRKPMGNA (178 aa)).

This sequence belongs to the glycosyltransferase 85 family.

Its subcellular location is the cell membrane. It carries out the reaction Adds an alpha-D-arabinofuranosyl group from trans,octacis-decaprenylphospho-beta-D-arabinofuranose at the 5-O-position of the eighth, tenth and twelfth galactofuranose unit of the galactofuranan chain of [beta-D-galactofuranosyl-(1-&gt;5)-beta-D-galactofuranosyl-(1-&gt;6)]14-beta-D-galactofuranosyl-(1-&gt;5)-beta-D-galactofuranosyl-(1-&gt;4)-alpha-L-rhamnopyranosyl-(1-&gt;3)-N-acetyl-alpha-D-glucosaminyl-diphospho-trans,octacis-decaprenol.. It participates in cell wall biogenesis; cell wall polysaccharide biosynthesis. Its function is as follows. Involved in the biosynthesis of the arabinogalactan (AG) region of the mycolylarabinogalactan-peptidoglycan (mAGP) complex, an essential component of the mycobacterial cell wall. Catalyzes the addition of the first key arabinofuranosyl (Araf) residue from the sugar donor decaprenyl-phospho-arabinose (DPA) on the C-5 of a 6-linked galactofuranosyl (Galf) of the galactan domain, thus 'priming' the galactan for further elaboration by other arabinofuranosyltransferases. In Mycobacterium leprae (strain TN), this protein is Galactan 5-O-arabinofuranosyltransferase.